Consider the following 186-residue polypeptide: Protein MTH_152 (186 aa).

Belongs to the flavoredoxin family. As to quaternary structure, homodimer. It depends on FMN as a cofactor.

This is Protein MTH_152 from Methanothermobacter thermautotrophicus (strain ATCC 29096 / DSM 1053 / JCM 10044 / NBRC 100330 / Delta H) (Methanobacterium thermoautotrophicum).